The following is a 317-amino-acid chain: Protein CbxX, plasmid (317 aa).

Position 85–92 (85–92 (GNPGTGKT)) interacts with ATP.

The protein belongs to the CbxX/CfxQ family.

Functionally, seems to be necessary for the expression of RuBisCO. In Cupriavidus necator (strain ATCC 17699 / DSM 428 / KCTC 22496 / NCIMB 10442 / H16 / Stanier 337) (Ralstonia eutropha), this protein is Protein CbxX, plasmid (cbxXP).